A 332-amino-acid polypeptide reads, in one-letter code: MVCTTLYTVCAILFILFIYILLFRKMFHLITDTLIVILILSNCVEWSQGQMFTDDIYYNGNVETIINSTDPFNVESLCIYFPNAVVGSQGPGKSDGHLNDGNYAQTIATLFETKGFPKGSIILKTYTQTSDFINSVEMTCSYNIVIIPDSPNDSESIEQIAEWILNVWRCDDMNLEIYTYEQIGINNLWAAFGSDCDISVCPLDTTSNGIGCSPASTETYEVVSNDTQLALINVVDNVRHRIQMNTAQCKLKNCIKGEARLNTALIRISTSSSFDNSLSPLNNGQTTRSFKINAKKWWTIFYTIIDYINTIVQAMTPRHRAIYPEGWMLRYA.

An N-terminal signal peptide occupies residues 1–49; that stretch reads MVCTTLYTVCAILFILFIYILLFRKMFHLITDTLIVILILSNCVEWSQG.

It belongs to the rotavirus VP7 family. As to quaternary structure, homotrimer; disulfide-linked. 2 Ca(2+) ions bound at each subunit interface in the trimer hold the trimer together. Interacts with the intermediate capsid protein VP6. Interacts with the outer capsid protein VP5*. In terms of processing, N-glycosylated. Post-translationally, intramolecular disulfide bonds.

The protein resides in the virion. It localises to the host endoplasmic reticulum lumen. In terms of biological role, calcium-binding protein that interacts with rotavirus cell receptors once the initial attachment by VP4 has been achieved. Rotavirus attachment and entry into the host cell probably involves multiple sequential contacts between the outer capsid proteins VP4 and VP7, and the cell receptors. Following entry into the host cell, low intracellular or intravesicular Ca(2+) concentration probably causes the calcium-stabilized VP7 trimers to dissociate from the virion. This step is probably necessary for the membrane-disrupting entry step and the release of VP4, which is locked onto the virion by VP7. This is Outer capsid glycoprotein VP7 from Homo sapiens (Human).